Here is a 570-residue protein sequence, read N- to C-terminus: MSEKHPGPLVVEGKLSDAERMKLESNYLRGTIAEDLNDGLTGGFKGDNFLLIRFHGMYQQDDRDIRAERAEQKLEPRHAMLLRCRLPGGVITTTQWQAIDKFAADNTIYGSIRLTNRQTFQFHGILKKNVKPVHQMLHSVGLDALATANDMNRNVLCTSNPYESQLHAEAYEWAKKISEHLLPRTRAYAEIWLDQEKVATTDEEPILGQTYLPRKFKTTVVIPPQNDIDLHANDMNFVAIAENGKLVGFNLLVGGGLSIEHGNKKTYARTASEFGYLPLEHTLAVAEAVVTTQRDWGNRTDRKNAKTKYTLERVGLETFKAEVERRAGIKFEPIRPYEFTGRGDRIGWVKGIDNNWHLTLFIENGRILDYPGRPLKTGLLEIAKIHQGEFRITANQNLIIASVPESQKAKIETLARDHGLMNAVSAQRENSMACVSFPTCPLAMAEAERFLPSFTDKVEAILEKHGIPDEHIVMRVTGCPNGCGRAMLAEIGLVGKAPGRYNLHLGGNRIGTRIPRMYQENITEPDILASLDELIGRWAKEREAGEGFGDFTVRAGIIRPVLDPARDFWE.

The [4Fe-4S] cluster site is built by cysteine 434, cysteine 440, cysteine 479, and cysteine 483. Cysteine 483 is a binding site for siroheme.

This sequence belongs to the nitrite and sulfite reductase 4Fe-4S domain family. Alpha(8)-beta(8). The alpha component is a flavoprotein, the beta component is a hemoprotein. The cofactor is siroheme. [4Fe-4S] cluster serves as cofactor.

The enzyme catalyses hydrogen sulfide + 3 NADP(+) + 3 H2O = sulfite + 3 NADPH + 4 H(+). It participates in sulfur metabolism; hydrogen sulfide biosynthesis; hydrogen sulfide from sulfite (NADPH route): step 1/1. Its function is as follows. Component of the sulfite reductase complex that catalyzes the 6-electron reduction of sulfite to sulfide. This is one of several activities required for the biosynthesis of L-cysteine from sulfate. The polypeptide is Sulfite reductase [NADPH] hemoprotein beta-component (Salmonella dublin (strain CT_02021853)).